We begin with the raw amino-acid sequence, 200 residues long: Small ribosomal subunit protein uS4 (200 aa).

Positions 21 to 42 (GTGKELQKRPYPPGQHGPGQRR) are disordered. The region spanning 92–155 (SRLDNLVYRL…RNLQVIKEAI (64 aa)) is the S4 RNA-binding domain.

It belongs to the universal ribosomal protein uS4 family. As to quaternary structure, part of the 30S ribosomal subunit. Contacts protein S5. The interaction surface between S4 and S5 is involved in control of translational fidelity.

Functionally, one of the primary rRNA binding proteins, it binds directly to 16S rRNA where it nucleates assembly of the body of the 30S subunit. In terms of biological role, with S5 and S12 plays an important role in translational accuracy. This Geobacillus thermodenitrificans (strain NG80-2) protein is Small ribosomal subunit protein uS4.